A 338-amino-acid chain; its full sequence is Extracellular globin (338 aa).

The first 18 residues, methionine 1–alanine 18, serve as a signal peptide directing secretion. Asparagine 19 carries an N-linked (GlcNAc...) asparagine glycan. Globin domains lie at cysteine 25 to arginine 167 and cysteine 174 to lysine 316. Positions 82 and 114 each coordinate heme b. Residue asparagine 216 is glycosylated (N-linked (GlcNAc...) asparagine). Glutamine 231 and histidine 263 together coordinate heme b. Positions arginine 313–histidine 338 are disordered.

It belongs to the globin family. As to quaternary structure, homooctamer.

It localises to the secreted. It is found in the extracellular space. In terms of biological role, has an extremely high oxygen affinity. In a vacuum, it takes several minutes to release its oxygen compared to milliseconds for a normal globin. Could be used as an oxygen scavenger for sterol biosynthesis. The protein is Extracellular globin of Ascaris suum (Pig roundworm).